A 521-amino-acid polypeptide reads, in one-letter code: Cytochrome P450 1A1 (521 aa).

Substrate is bound at residue phenylalanine 229. Cysteine 463 provides a ligand contact to heme.

It belongs to the cytochrome P450 family. Heme is required as a cofactor.

The protein resides in the endoplasmic reticulum membrane. It localises to the microsome membrane. It catalyses the reaction an organic molecule + reduced [NADPH--hemoprotein reductase] + O2 = an alcohol + oxidized [NADPH--hemoprotein reductase] + H2O + H(+). Cytochromes P450 are a group of heme-thiolate monooxygenases. They oxidize a variety of structurally unrelated compounds, including steroids, fatty acids, and xenobiotics. The protein is Cytochrome P450 1A1 (cyp1a1) of Opsanus tau (Oyster toadfish).